Reading from the N-terminus, the 423-residue chain is 3-phosphoshikimate 1-carboxyvinyltransferase (423 aa).

3-phosphoshikimate is bound by residues Lys-21, Ser-22, and Arg-26. Residue Lys-21 participates in phosphoenolpyruvate binding. Gly-92 and Arg-120 together coordinate phosphoenolpyruvate. 3-phosphoshikimate-binding residues include Ser-166, Gln-168, Ser-194, Asp-310, and Lys-337. Phosphoenolpyruvate is bound at residue Gln-168. Asp-310 functions as the Proton acceptor in the catalytic mechanism. Residues Arg-341, Arg-384, and Lys-409 each contribute to the phosphoenolpyruvate site.

Belongs to the EPSP synthase family. In terms of assembly, monomer.

Its subcellular location is the cytoplasm. It catalyses the reaction 3-phosphoshikimate + phosphoenolpyruvate = 5-O-(1-carboxyvinyl)-3-phosphoshikimate + phosphate. It participates in metabolic intermediate biosynthesis; chorismate biosynthesis; chorismate from D-erythrose 4-phosphate and phosphoenolpyruvate: step 6/7. Its function is as follows. Catalyzes the transfer of the enolpyruvyl moiety of phosphoenolpyruvate (PEP) to the 5-hydroxyl of shikimate-3-phosphate (S3P) to produce enolpyruvyl shikimate-3-phosphate and inorganic phosphate. The protein is 3-phosphoshikimate 1-carboxyvinyltransferase of Syntrophobacter fumaroxidans (strain DSM 10017 / MPOB).